The sequence spans 247 residues: Sugar fermentation stimulation protein homolog (247 aa).

The protein belongs to the SfsA family.

This Methanococcoides burtonii (strain DSM 6242 / NBRC 107633 / OCM 468 / ACE-M) protein is Sugar fermentation stimulation protein homolog.